Here is a 1377-residue protein sequence, read N- to C-terminus: Endoribonuclease Dicer homolog 2b (1377 aa).

The segment covering Met-1–Gly-15 has biased composition (gly residues). The tract at residues Met-1–Pro-30 is disordered. In terms of domain architecture, Helicase ATP-binding spans Ala-41–Ile-222. Residue Leu-54–Thr-61 participates in ATP binding. Residues Asp-163–His-166 carry the DECH box motif. In terms of domain architecture, Helicase C-terminal spans Thr-388 to Pro-561. Positions Ser-534–Glu-626 constitute a Dicer dsRNA-binding fold domain. The PAZ domain maps to Arg-798–Met-913. 2 consecutive RNase III domains span residues Ser-940–Gly-1095 and Val-1132–Lys-1276. Glu-1171, Asp-1262, and Glu-1265 together coordinate Mg(2+). A DRBM domain is found at Asp-1302 to Ala-1367.

The protein belongs to the helicase family. Dicer subfamily. In terms of assembly, may interact with ARGONAUTE1 or PINHEAD through their common PAZ domains. The cofactor is Mg(2+). Mn(2+) is required as a cofactor.

It localises to the nucleus. Functionally, probably involved in the RNA silencing pathway. May cleave double-stranded RNA to produce short 21-24 nucleotides (nt) RNAs which target the selective destruction of complementary RNAs. This is Endoribonuclease Dicer homolog 2b (DCL2B) from Oryza sativa subsp. japonica (Rice).